Here is a 452-residue protein sequence, read N- to C-terminus: Transcription factor ETV6 (452 aa).

Lysine 11 is subject to N6-acetyllysine; alternate. Lysine 11 is covalently cross-linked (Glycyl lysine isopeptide (Lys-Gly) (interchain with G-Cter in SUMO2); alternate). Threonine 18 is subject to Phosphothreonine. A Phosphoserine modification is found at serine 22. Residues 40–124 (ALRMEEDSIR…ELLQHILKQR (85 aa)) enclose the PNT domain. The disordered stretch occupies residues 154–262 (EDNGVQRTSR…PRPSSPRQEG (109 aa)). Residues 158–174 (VQRTSRPSAENVHQNPP) are compositionally biased toward polar residues. Residues serine 213, serine 238, and serine 257 each carry the phosphoserine modification. A Glycyl lysine isopeptide (Lys-Gly) (interchain with G-Cter in SUMO2) cross-link involves residue lysine 288. Lysine 302 carries the N6-acetyllysine; alternate modification. A Glycyl lysine isopeptide (Lys-Gly) (interchain with G-Cter in SUMO2); alternate cross-link involves residue lysine 302. Serine 323 carries the post-translational modification Phosphoserine. Positions 339-420 (RLLWDYVYQL…PGQRLLFRFM (82 aa)) form a DNA-binding region, ETS. Residues lysine 403 and lysine 421 each participate in a glycyl lysine isopeptide (Lys-Gly) (interchain with G-Cter in SUMO2) cross-link.

This sequence belongs to the ETS family. Can form homodimers or heterodimers with TEL2 or FLI1. Interacts with L3MBTL1 and HDAC9.

It is found in the nucleus. Transcriptional repressor; binds to the DNA sequence 5'-CCGGAAGT-3'. Plays a role in hematopoiesis and malignant transformation. The polypeptide is Transcription factor ETV6 (ETV6) (Bos taurus (Bovine)).